The chain runs to 232 residues: Demethylmenaquinone methyltransferase (232 aa).

S-adenosyl-L-methionine-binding positions include T58, D79, and 104-105; that span reads NA.

This sequence belongs to the class I-like SAM-binding methyltransferase superfamily. MenG/UbiE family.

The catalysed reaction is a 2-demethylmenaquinol + S-adenosyl-L-methionine = a menaquinol + S-adenosyl-L-homocysteine + H(+). The protein operates within quinol/quinone metabolism; menaquinone biosynthesis; menaquinol from 1,4-dihydroxy-2-naphthoate: step 2/2. Methyltransferase required for the conversion of demethylmenaquinol (DMKH2) to menaquinol (MKH2). In Bacillus licheniformis (strain ATCC 14580 / DSM 13 / JCM 2505 / CCUG 7422 / NBRC 12200 / NCIMB 9375 / NCTC 10341 / NRRL NRS-1264 / Gibson 46), this protein is Demethylmenaquinone methyltransferase.